Consider the following 399-residue polypeptide: Argininosuccinate synthase (399 aa).

ATP contacts are provided by residues 10 to 18 (AYSGGVDTS) and Ala-38. Residue Tyr-89 participates in L-citrulline binding. Position 119 (Gly-119) interacts with ATP. 3 residues coordinate L-aspartate: Thr-121, Asn-125, and Asp-126. Asn-125 is an L-citrulline binding site. L-citrulline is bound by residues Arg-129, Ser-177, Ser-186, Glu-262, and Tyr-274.

Belongs to the argininosuccinate synthase family. Type 1 subfamily. In terms of assembly, homotetramer.

The protein resides in the cytoplasm. The catalysed reaction is L-citrulline + L-aspartate + ATP = 2-(N(omega)-L-arginino)succinate + AMP + diphosphate + H(+). It functions in the pathway amino-acid biosynthesis; L-arginine biosynthesis; L-arginine from L-ornithine and carbamoyl phosphate: step 2/3. This is Argininosuccinate synthase from Acaryochloris marina (strain MBIC 11017).